A 335-amino-acid polypeptide reads, in one-letter code: Glyoxylate reductase (335 aa).

NADP(+)-binding positions include 159–162, 181–183, and 240–242; these read MGRI, SRS, and TGR. Active-site residues include arginine 242 and glutamate 271. Histidine 290 acts as the Proton donor in catalysis. Residue 290-292 coordinates NADP(+); sequence HAA.

It belongs to the D-isomer specific 2-hydroxyacid dehydrogenase family. GyaR subfamily. In terms of assembly, homodimer.

It is found in the cytoplasm. The catalysed reaction is glycolate + NAD(+) = glyoxylate + NADH + H(+). The chain is Glyoxylate reductase from Aeropyrum pernix (strain ATCC 700893 / DSM 11879 / JCM 9820 / NBRC 100138 / K1).